A 109-amino-acid chain; its full sequence is Thiosulfate sulfurtransferase GlpE (109 aa).

The Rhodanese domain occupies 17–105 (HQQTAVLVDI…WHRHFPAEVA (89 aa)). The Cysteine persulfide intermediate role is filled by Cys-65.

This sequence belongs to the GlpE family.

The protein localises to the cytoplasm. The enzyme catalyses thiosulfate + hydrogen cyanide = thiocyanate + sulfite + 2 H(+). The catalysed reaction is thiosulfate + [thioredoxin]-dithiol = [thioredoxin]-disulfide + hydrogen sulfide + sulfite + 2 H(+). Functionally, transferase that catalyzes the transfer of sulfur from thiosulfate to thiophilic acceptors such as cyanide or dithiols. May function in a CysM-independent thiosulfate assimilation pathway by catalyzing the conversion of thiosulfate to sulfite, which can then be used for L-cysteine biosynthesis. This Klebsiella pneumoniae (strain 342) protein is Thiosulfate sulfurtransferase GlpE.